The sequence spans 63 residues: Large ribosomal subunit protein bL28 (63 aa).

Over residues 11–20 the composition is skewed to polar residues; it reads GNNSGASVSH. The tract at residues 11–30 is disordered; sequence GNNSGASVSHSNKKTKRKWK. Over residues 21 to 30 the composition is skewed to basic residues; the sequence is SNKKTKRKWK.

It belongs to the bacterial ribosomal protein bL28 family.

This is Large ribosomal subunit protein bL28 from Natranaerobius thermophilus (strain ATCC BAA-1301 / DSM 18059 / JW/NM-WN-LF).